The sequence spans 68 residues: Metallothionein-3 (68 aa).

Met1 carries the post-translational modification N-acetylmethionine. The segment at 1 to 30 (MDPETCPCPSGGSCTCADSCKCEGCKCTSC) is beta. The a divalent metal cation site is built by Cys6, Cys8, Cys14, Cys16, Cys20, Cys22, Cys25, Cys27, and Cys30. The interval 31–68 (KKSCCSCCPAECEKCAKDCVCKGGEGAEAEAEKCSCCE) is alpha. Position 33 is a phosphoserine (Ser33). A divalent metal cation-binding residues include Cys34, Cys35, Cys37, Cys38, Cys42, Cys45, Cys49, Cys51, Cys64, Cys66, and Cys67.

This sequence belongs to the metallothionein superfamily. Type 1 family.

In terms of biological role, binds heavy metals. Contains five zinc and one copper atoms per polypeptide chain and only a negligible amount of cadmium. In Macaca fascicularis (Crab-eating macaque), this protein is Metallothionein-3 (MT3).